A 145-amino-acid polypeptide reads, in one-letter code: Large ribosomal subunit protein uL24 (145 aa).

Disordered regions lie at residues 1–21 (MKFNPFVTSDRSKNRKRHFNA) and 122–145 (KAKSRQVGKEKGKYKEETIEKMQE). Lysine 136 is covalently cross-linked (Glycyl lysine isopeptide (Lys-Gly) (interchain with G-Cter in SUMO2)). A Phosphothreonine modification is found at threonine 139.

Belongs to the universal ribosomal protein uL24 family. In terms of assembly, component of the large ribosomal subunit. Interacts with DHX33. Post-translationally, ufmylated by UFL1 in response to endoplasmic reticulum stress, promoting reticulophagy of endoplasmic reticulum sheets.

The protein localises to the cytoplasm. Its function is as follows. Component of the large ribosomal subunit. The ribosome is a large ribonucleoprotein complex responsible for the synthesis of proteins in the cell. The sequence is that of Large ribosomal subunit protein uL24 (RPL26) from Bos taurus (Bovine).